The sequence spans 203 residues: Orotate phosphoribosyltransferase (203 aa).

Residues R94, K98, H100, and 120 to 128 each bind 5-phospho-alpha-D-ribose 1-diphosphate; that span reads EDLISTGGS. S124 is an orotate binding site.

It belongs to the purine/pyrimidine phosphoribosyltransferase family. PyrE subfamily. Homodimer. Requires Mg(2+) as cofactor.

It catalyses the reaction orotidine 5'-phosphate + diphosphate = orotate + 5-phospho-alpha-D-ribose 1-diphosphate. Its pathway is pyrimidine metabolism; UMP biosynthesis via de novo pathway; UMP from orotate: step 1/2. Its function is as follows. Catalyzes the transfer of a ribosyl phosphate group from 5-phosphoribose 1-diphosphate to orotate, leading to the formation of orotidine monophosphate (OMP). In Staphylococcus aureus (strain COL), this protein is Orotate phosphoribosyltransferase.